Consider the following 166-residue polypeptide: Putative peroxisomal peroxiredoxin (166 aa).

A Thioredoxin domain is found at 5–166; that stretch reads FPEDVKFLYI…SGVDAVLAAL (162 aa). Cys56 serves as the catalytic Cysteine sulfenic acid (-SOH) intermediate.

The protein belongs to the peroxiredoxin family. Prx5 subfamily. Homodimer; disulfide-linked, upon oxidation.

It catalyses the reaction a hydroperoxide + [protein]-dithiol = [protein]-disulfide + an alcohol + H2O. Functionally, thiol-specific peroxidase that catalyzes the reduction of hydrogen peroxide and organic hydroperoxides to water and alcohols, respectively. Plays a role in cell protection against oxidative stress by detoxifying peroxides and as sensor of hydrogen peroxide-mediated signaling events. This is Putative peroxisomal peroxiredoxin from Lipomyces kononenkoae (Yeast).